The following is a 287-amino-acid chain: GTPase Era (287 aa).

One can recognise an Era-type G domain in the interval 11–174 (RSGFVAVIGR…RSYLASSLPE (164 aa)). GTP-binding positions include 19–26 (GRTNVGKS) and 66–70 (DTPGI). The 69-residue stretch at 205-273 (LRDELPQALA…PLTLRVKVQR (69 aa)) folds into the KH type-2 domain.

Belongs to the TRAFAC class TrmE-Era-EngA-EngB-Septin-like GTPase superfamily. Era GTPase family. As to quaternary structure, monomer.

Its subcellular location is the cytoplasm. The protein localises to the cell membrane. In terms of biological role, an essential GTPase that binds both GDP and GTP, with rapid nucleotide exchange. Plays a role in 16S rRNA processing and 30S ribosomal subunit biogenesis and possibly also in cell cycle regulation and energy metabolism. This chain is GTPase Era, found in Acidimicrobium ferrooxidans (strain DSM 10331 / JCM 15462 / NBRC 103882 / ICP).